Reading from the N-terminus, the 457-residue chain is Choline kinase alpha (457 aa).

The segment at 1-86 (MKTKFCTGGE…PPADEQPEPR (86 aa)) is disordered. Residues 13-32 (PSPLGLLLSCGSGSAAPAPG) are compositionally biased toward low complexity. A compositionally biased stretch (pro residues) spans 55 to 80 (LALPPPPPLPLPLPLPQPPPPQPPAD). ATP-binding positions include 117–123 (RGGLSNM), R146, and 207–213 (QFIPSRR). 119 to 121 (GLS) serves as a coordination point for phosphocholine. Position 247 is an N6-acetyllysine (K247). A Phosphoserine modification is found at S279. Residues Q308 and D330 each contribute to the ATP site.

Belongs to the choline/ethanolamine kinase family. As to quaternary structure, homodimer. Heterodimer with CHKB. Monomer; acetylation by KAT5 promotes dissociation of the homodimer and monomerization. In terms of assembly, (Microbial infection) Interacts with PI4KA/PI4KIIIalpha; CHKA bridges PI4KA/PI4KIIIalpha and hepatitis C virus (HCV) non-structural protein 5A (NS5A) and potentiates NS5A-stimulated PI4KA activity, which then facilitates the targeting of the ternary complex to the ER for viral replication. Post-translationally, phosphorylated at Ser-279 by AMPK in response to glucose deprivation, leading to localization to lipid droplets. In terms of processing, acetylated by KAT5 at Lys-247 following phosphorylation by AMPK, leading to monomerization and conversion into a tyrosine-protein kinase.

Its subcellular location is the cytoplasm. The protein localises to the cytosol. It is found in the lipid droplet. It carries out the reaction choline + ATP = phosphocholine + ADP + H(+). The catalysed reaction is ethanolamine + ATP = phosphoethanolamine + ADP + H(+). It catalyses the reaction L-tyrosyl-[protein] + ATP = O-phospho-L-tyrosyl-[protein] + ADP + H(+). The protein operates within phospholipid metabolism; phosphatidylcholine biosynthesis; phosphocholine from choline: step 1/1. Its pathway is phospholipid metabolism; phosphatidylethanolamine biosynthesis; phosphatidylethanolamine from ethanolamine: step 1/3. Homodimerization or heterodimerization is required for the choline and ethanolamine kinase activities. In terms of biological role, plays a key role in phospholipid biosynthesis by catalyzing the phosphorylation of free choline to phosphocholine, the first step in phosphatidylcholine biosynthesis. Also phosphorylates ethanolamine, thereby contributing to phosphatidylethanolamine biosynthesis. Has higher activity with choline. May contribute to tumor cell growth. Its function is as follows. This isoform plays a key role in lipolysis of lipid droplets following glucose deprivation. In response to glucose deprivation, phosphorylated by AMPK, promoting localization to lipid droplets. Phosphorylation is followed by acetylation by KAT5, leading to dissociation of the homodimer into a monomer. Monomeric CHKA isoform 1 is converted into a tyrosine-protein kinase, which phosphorylates lipid droplet structural proteins PLIN2 and PLIN3, leading to lipolysis of lipid droplets. The polypeptide is Choline kinase alpha (CHKA) (Homo sapiens (Human)).